We begin with the raw amino-acid sequence, 438 residues long: Coenzyme A disulfide reductase (438 aa).

Residue 8-33 participates in FAD binding; sequence GAVAGGATCASQIRRLDKESDIIIFE. 5 residues coordinate substrate: Thr15, Gln19, Arg22, Ser39, and Asn42. The active-site Nucleophile is Cys43. The active-site Redox-active is the Cys43. Lys71 contributes to the substrate binding site. 151 to 166 serves as a coordination point for NADP(+); the sequence is VLVIGAGYVSLEVLEN. FAD is bound at residue 267–277; that stretch reads TNVPNIYAIGD. His299 contributes to the substrate binding site. Tyr419 provides a ligand contact to FAD. Position 427 (Lys427) interacts with substrate.

The protein belongs to the class-III pyridine nucleotide-disulfide oxidoreductase family. In terms of assembly, homodimer. The cofactor is FAD.

It catalyses the reaction NADP(+) + 2 CoA = CoA-disulfide + NADPH + H(+). Functionally, catalyzes specifically the NADPH-dependent reduction of coenzyme A disulfide. The chain is Coenzyme A disulfide reductase from Staphylococcus aureus (strain JH1).